The primary structure comprises 26 residues: MAQDIISTISDLVKWIIDTVNKFTKK.

Position 1 is an N-formylmethionine (Met-1).

It belongs to the delta-lysin family.

The protein localises to the secreted. Its subcellular location is the host cell membrane. In terms of biological role, lyses erythrocytes and many other mammalian cells. In Staphylococcus aureus (strain MSSA476), this protein is Delta-hemolysin (hld).